A 201-amino-acid chain; its full sequence is Ras-related protein Rab-5A (201 aa).

Residues 16 to 24 (GEAAVGKSS), 35 to 41 (LDYQEST), 64 to 68 (DTAGQ), 122 to 125 (NKLD), and 152 to 154 (SAK) contribute to the GTP site. The short motif at 38–46 (QESTIGAAF) is the Effector region element. Residues Cys-199 and Cys-200 are each lipidated (S-geranylgeranyl cysteine).

This sequence belongs to the small GTPase superfamily. Rab family.

It is found in the cell membrane. It localises to the endosome membrane. Regulated by guanine nucleotide exchange factors (GEFs) which promote the exchange of bound GDP for free GTP. Functionally, required for the fusion of plasma membranes and early endosomes. This chain is Ras-related protein Rab-5A (rab5A), found in Dictyostelium discoideum (Social amoeba).